The following is a 157-amino-acid chain: Glycine-rich RNA-binding protein (157 aa).

Residues 6–84 (YRCFVGGLAW…RNITVNEAQS (79 aa)) enclose the RRM domain. A disordered region spans residues 70 to 157 (QELDGRNITV…YGGGGGGSRW (88 aa)). 2 stretches are compositionally biased toward gly residues: residues 86–138 (GSGG…GGYG) and 145–157 (DGGYGGGGGGSRW).

Its function is as follows. May play a role in the biosynthesis and processing of heterogeneous nuclear RNA and in the maturation of specific mRNAs in response to wounding. The polypeptide is Glycine-rich RNA-binding protein (Daucus carota (Wild carrot)).